The following is a 277-amino-acid chain: Inner kinetochore subunit sim4 (277 aa).

Residues 96–138 (NNISDLKKNLHSNKKLEAVLKEELHQIKKFSSDLQSLKSSMGE) are a coiled coil.

It belongs to the CENP-K/MCM22 family. As to quaternary structure, component of the inner kinetochore constitutive centromere-associated network (CCAN) (also known as central kinetochore Sim4 complex in fission yeast), which is composed of at least cnl2, cnp3, cnp20, fta1, fta2, fta3, fta4, fta6, fta7, mal2, mhf1, mhf2, mis6, mis15, mis17, sim4 and wip1. Interacts with mis6 and dad1.

The protein localises to the nucleus. The protein resides in the chromosome. Its subcellular location is the centromere. In terms of biological role, component of the kinetochore, a multiprotein complex that assembles on centromeric DNA and attaches chromosomes to spindle microtubules, mediating chromosome segregation and sister chromatid segregation during meiosis and mitosis. Component of the inner kinetochore constitutive centromere-associated network (CCAN), which serves as a structural platform for outer kinetochore assembly. This chain is Inner kinetochore subunit sim4 (sim4), found in Schizosaccharomyces pombe (strain 972 / ATCC 24843) (Fission yeast).